The primary structure comprises 547 residues: Chaperonin GroEL 1 (547 aa).

Residues 30–33 (TLGP), lysine 51, 87–91 (DGTTT), glycine 415, 479–481 (NAA), and aspartate 495 each bind ATP.

The protein belongs to the chaperonin (HSP60) family. In terms of assembly, forms a cylinder of 14 subunits composed of two heptameric rings stacked back-to-back. Interacts with the co-chaperonin GroES.

Its subcellular location is the cytoplasm. The catalysed reaction is ATP + H2O + a folded polypeptide = ADP + phosphate + an unfolded polypeptide.. Together with its co-chaperonin GroES, plays an essential role in assisting protein folding. The GroEL-GroES system forms a nano-cage that allows encapsulation of the non-native substrate proteins and provides a physical environment optimized to promote and accelerate protein folding. The protein is Chaperonin GroEL 1 of Vibrio parahaemolyticus serotype O3:K6 (strain RIMD 2210633).